Consider the following 139-residue polypeptide: ATP synthase epsilon chain (139 aa).

It belongs to the ATPase epsilon chain family. In terms of assembly, F-type ATPases have 2 components, CF(1) - the catalytic core - and CF(0) - the membrane proton channel. CF(1) has five subunits: alpha(3), beta(3), gamma(1), delta(1), epsilon(1). CF(0) has three main subunits: a, b and c.

Its subcellular location is the cell inner membrane. Functionally, produces ATP from ADP in the presence of a proton gradient across the membrane. The chain is ATP synthase epsilon chain from Actinobacillus pleuropneumoniae serotype 7 (strain AP76).